A 1370-amino-acid chain; its full sequence is DNA-directed RNA polymerase subunit beta (1370 aa).

It belongs to the RNA polymerase beta chain family. In terms of assembly, the RNAP catalytic core consists of 2 alpha, 1 beta, 1 beta' and 1 omega subunit. When a sigma factor is associated with the core the holoenzyme is formed, which can initiate transcription.

It catalyses the reaction RNA(n) + a ribonucleoside 5'-triphosphate = RNA(n+1) + diphosphate. In terms of biological role, DNA-dependent RNA polymerase catalyzes the transcription of DNA into RNA using the four ribonucleoside triphosphates as substrates. This chain is DNA-directed RNA polymerase subunit beta, found in Geobacter sulfurreducens (strain ATCC 51573 / DSM 12127 / PCA).